We begin with the raw amino-acid sequence, 319 residues long: Protein HEXIM1 (319 aa).

The segment covering 1–22 has biased composition (basic and acidic residues); it reads MELIKEETAPEDDSRGRQRDCR. 4 disordered regions span residues 1-111, 157-223, 262-286, and 299-319; these read MELI…KKRR, LMEE…LQKD, NNWLRHVRRNPESPADGTGSQRVRE, and NELLLKTPASNEPGLNQSQPS. Residues 24–35 are compositionally biased toward polar residues; it reads SVVSSKQVQRNQ. Basic and acidic residues predominate over residues 49-61; sequence PMCRDRSDPEPRT. Positions 97–111 are enriched in basic residues; that stretch reads GKKKHRRRPSKKKRR. Over residues 185-202 the composition is skewed to acidic residues; sequence TASEDENFEAEEDDEEEG. Gly residues predominate over residues 203–216; it reads GGGSDGMGRPGQAG. Residues 240 to 306 adopt a coiled-coil conformation; sequence SKQELVREYL…ENNELLLKTP (67 aa). Residues 306 to 319 show a composition bias toward polar residues; the sequence is PASNEPGLNQSQPS.

Belongs to the HEXIM family. In terms of assembly, homooligomer and heterooligomer. Core component of the 7SK RNP complex.

The protein localises to the nucleus. It localises to the cytoplasm. Functionally, transcriptional regulator which functions as a general RNA polymerase II transcription inhibitor. Core component of the 7SK RNP complex: in cooperation with 7SK snRNA sequesters P-TEFb in a large inactive 7SK snRNP complex preventing RNA polymerase II phosphorylation and subsequent transcriptional elongation. Plays a role in the regulation of DNA virus-mediated innate immune response by assembling into the HDP-RNP complex, a complex that serves as a platform for IRF3 phosphorylation and subsequent innate immune response activation through the cGAS-STING pathway. This is Protein HEXIM1 (hexim1) from Danio rerio (Zebrafish).